We begin with the raw amino-acid sequence, 232 residues long: Uracil-DNA glycosylase (232 aa).

The active-site Proton acceptor is the aspartate 66.

Belongs to the uracil-DNA glycosylase (UDG) superfamily. UNG family.

Its subcellular location is the cytoplasm. The catalysed reaction is Hydrolyzes single-stranded DNA or mismatched double-stranded DNA and polynucleotides, releasing free uracil.. Functionally, excises uracil residues from the DNA which can arise as a result of misincorporation of dUMP residues by DNA polymerase or due to deamination of cytosine. The chain is Uracil-DNA glycosylase from Lactobacillus acidophilus (strain ATCC 700396 / NCK56 / N2 / NCFM).